Reading from the N-terminus, the 343-residue chain is Ferredoxin--NADP reductase (343 aa).

Asp-31, Lys-39, Tyr-43, Val-83, Ile-118, Asp-285, and Ser-326 together coordinate FAD.

This sequence belongs to the ferredoxin--NADP reductase type 2 family. As to quaternary structure, homodimer. Requires FAD as cofactor.

It carries out the reaction 2 reduced [2Fe-2S]-[ferredoxin] + NADP(+) + H(+) = 2 oxidized [2Fe-2S]-[ferredoxin] + NADPH. This chain is Ferredoxin--NADP reductase, found in Staphylococcus saprophyticus subsp. saprophyticus (strain ATCC 15305 / DSM 20229 / NCIMB 8711 / NCTC 7292 / S-41).